Reading from the N-terminus, the 506-residue chain is MKIYSRTVAVSLIVSFLLCFSAFAERNDGTFRVGLKKLKLDSKNRLAARVESKQEKPLRAYRLGDSGDADVVVLKNYLDAQYYGEIAIGTPPQKFTVVFDTGSSNLWVPSSKCYFSLACLLHPKYKSSRSSTYEKNGKAAAIHYGTGAIAGFFSNDAVTVGDLVVKDQEFIEATKEPGITFVVAKFDGILGLGFQEISVGKAAPVWYNMLKQGLIKEPVFSFWLNRNADEEEGGELVFGGVDPNHFKGKHTYVPVTQKGYWQFDMGDVLIGGAPTGFCESGCSAIADSGTSLLAGPTTIITMINHAIGAAGVVSQQCKTVVDQYGQTILDLLLSETQPKKICSQIGLCTFDGTRGVSMGIESVVDKENAKLSNGVGDAACSACEMAVVWIQSQLRQNMTQERILNYVNELCERLPSPMGESAVDCAQLSTMPTVSLTIGGKVFDLAPEEYVLKVGEGPVAQCISGFIALDVAPPRGPLWILGDVFMGKYHTVFDFGNEQVGFAEAA.

Positions 1–24 (MKIYSRTVAVSLIVSFLLCFSAFA) are cleaved as a signal peptide. A propeptide spans 25 to 64 (ERNDGTFRVGLKKLKLDSKNRLAARVESKQEKPLRAYRLG) (activation peptide). The Peptidase A1 domain occupies 82 to 503 (YYGEIAIGTP…DFGNEQVGFA (422 aa)). The active site involves aspartate 100. Disulfide bonds link cysteine 113-cysteine 119 and cysteine 278-cysteine 282. The active site involves aspartate 287. The Saposin B-type domain maps to 312–417 (VVSQQCKTVV…NELCERLPSP (106 aa)). 4 disulfide bridges follow: cysteine 317–cysteine 411, cysteine 342–cysteine 383, cysteine 348–cysteine 380, and cysteine 425–cysteine 462. An N-linked (GlcNAc...) asparagine glycan is attached at asparagine 397.

The protein belongs to the peptidase A1 family. Expressed in roots, leaves, stems, petals, carpels, seed pods and dry seeds.

It is found in the vacuole. Its function is as follows. Involved in the breakdown of propeptides of storage proteins in protein-storage vacuoles. Possesses aspartic protease activity in vitro. The polypeptide is Aspartic proteinase A1 (APA1) (Arabidopsis thaliana (Mouse-ear cress)).